We begin with the raw amino-acid sequence, 299 residues long: NAD(+) hydrolase PdTIR (299 aa).

Residues 164-297 form the TIR domain; the sequence is PPHDIFISHA…EIVADLMAII (134 aa). NAD(+) contacts are provided by residues 173–174 and Arg-203; that span reads AW. Residue Glu-239 is part of the active site.

In terms of assembly, homodimer. Interacts with host MYD88.

It catalyses the reaction NAD(+) + H2O = ADP-D-ribose + nicotinamide + H(+). In terms of biological role, NAD(+) hydrolase (NADase) that catalyzes cleavage of NAD(+) into ADP-D-ribose (ADPR) and nicotinamide. The polypeptide is NAD(+) hydrolase PdTIR (Paracoccus denitrificans (strain Pd 1222)).